A 51-amino-acid polypeptide reads, in one-letter code: AAHGGPPFEPHATVVGAVAAAAAADVAPYTATTPYMPHVSLLYGDLTDEEK.

The active-site Proton donor/acceptor is His11. Thr13 contributes to the substrate binding site. His38 serves as the catalytic Proton donor/acceptor. Positions 40 and 43 each coordinate substrate.

Belongs to the 2H phosphoesterase superfamily. CPD1 family.

In terms of biological role, hydrolyzes ADP-ribose 1'',2''-cyclic phosphate (Appr&gt;1) that is produced during tRNA splicing into ADP-ribose 1''-phosphate (Appr-1''p). The polypeptide is Cyclic phosphodiesterase (Triticum aestivum (Wheat)).